The sequence spans 378 residues: Ribosomal RNA large subunit methyltransferase G (378 aa).

This sequence belongs to the methyltransferase superfamily. RlmG family.

The protein resides in the cytoplasm. The catalysed reaction is guanosine(1835) in 23S rRNA + S-adenosyl-L-methionine = N(2)-methylguanosine(1835) in 23S rRNA + S-adenosyl-L-homocysteine + H(+). In terms of biological role, specifically methylates the guanine in position 1835 (m2G1835) of 23S rRNA. This is Ribosomal RNA large subunit methyltransferase G from Salmonella gallinarum (strain 287/91 / NCTC 13346).